Reading from the N-terminus, the 248-residue chain is UDP-2,3-diacylglucosamine hydrolase (248 aa).

Residues D7, H9, D40, N78, and H113 each contribute to the Mn(2+) site. Residue N78–R79 participates in substrate binding. Residues D121, S159, T163, K166, and H194 each contribute to the substrate site. Residues H194 and H196 each contribute to the Mn(2+) site.

The protein belongs to the LpxH family. Requires Mn(2+) as cofactor.

It localises to the cell inner membrane. It carries out the reaction UDP-2-N,3-O-bis[(3R)-3-hydroxytetradecanoyl]-alpha-D-glucosamine + H2O = 2-N,3-O-bis[(3R)-3-hydroxytetradecanoyl]-alpha-D-glucosaminyl 1-phosphate + UMP + 2 H(+). Its pathway is glycolipid biosynthesis; lipid IV(A) biosynthesis; lipid IV(A) from (3R)-3-hydroxytetradecanoyl-[acyl-carrier-protein] and UDP-N-acetyl-alpha-D-glucosamine: step 4/6. Its function is as follows. Hydrolyzes the pyrophosphate bond of UDP-2,3-diacylglucosamine to yield 2,3-diacylglucosamine 1-phosphate (lipid X) and UMP by catalyzing the attack of water at the alpha-P atom. Involved in the biosynthesis of lipid A, a phosphorylated glycolipid that anchors the lipopolysaccharide to the outer membrane of the cell. The chain is UDP-2,3-diacylglucosamine hydrolase from Pseudomonas syringae pv. tomato (strain ATCC BAA-871 / DC3000).